A 156-amino-acid chain; its full sequence is MMSQTLTLCCLGLVACVYGNTVSTNDTACPTFCPSIYKPVCGTDGQNFKEFASTCNLLSHNCRRERNSVQAYAATDAAWCSSEFVENLHEKLGNFKLEVKECFKPCSMIYQPVCITNGKYRAELANSCLLENFNCALQVSGAQPAELFRLLREEKC.

Positions 1–19 are cleaved as a signal peptide; sequence MMSQTLTLCCLGLVACVYG. 2 consecutive Kazal-like domains span residues 23–81 and 96–156; these read STND…AWCS and KLEV…EEKC. Cystine bridges form between Cys29–Cys62, Cys33–Cys55, Cys102–Cys135, Cys106–Cys128, and Cys114–Cys156.

The polypeptide is Enhancer of split M1 protein (Drosophila simulans (Fruit fly)).